Reading from the N-terminus, the 458-residue chain is Elongation factor 1-alpha (458 aa).

Residue glycine 2 is modified to N,N,N-trimethylglycine. At lysine 3 the chain carries N6,N6-dimethyllysine; alternate. The residue at position 3 (lysine 3) is an N6-methyllysine; alternate. In terms of domain architecture, tr-type G spans 5–240 (KTHVNVVVIG…DAIEPPQRPT (236 aa)). Residues 14–21 (GHVDSGKS) are G1. Residue 14–21 (GHVDSGKS) participates in GTP binding. Residue lysine 30 is modified to N6-methyllysine. Positions 70–74 (GITID) are G2. Lysine 79 carries the post-translational modification N6,N6,N6-trimethyllysine. The interval 91 to 94 (DAPG) is G3. GTP contacts are provided by residues 91–95 (DAPGH) and 153–156 (NKMD). Residues 153-156 (NKMD) form a G4 region. A G5 region spans residues 192–194 (SGW). Residue lysine 316 is modified to N6,N6-dimethyllysine; alternate. N6-methyllysine; alternate is present on lysine 316. An N6-methyllysine modification is found at lysine 390.

Belongs to the TRAFAC class translation factor GTPase superfamily. Classic translation factor GTPase family. EF-Tu/EF-1A subfamily.

It localises to the cytoplasm. The protein operates within protein biosynthesis; polypeptide chain elongation. Its function is as follows. This protein promotes the GTP-dependent binding of aminoacyl-tRNA to the A-site of ribosomes during protein biosynthesis. The chain is Elongation factor 1-alpha (TEF1) from Meyerozyma guilliermondii (strain ATCC 6260 / CBS 566 / DSM 6381 / JCM 1539 / NBRC 10279 / NRRL Y-324) (Yeast).